We begin with the raw amino-acid sequence, 110 residues long: MVMSRGFNPMQQVKALQDKMARMQEELALKTVEASAGGGMVAVVVNGRQEVLSVKVDRQVVDPEDIEMLQDLIVAAVNDGLRKSQEMAAQEMGKIAGGLNIPGLKIPGLF.

This sequence belongs to the YbaB/EbfC family. As to quaternary structure, homodimer.

The protein localises to the cytoplasm. The protein resides in the nucleoid. Binds to DNA and alters its conformation. May be involved in regulation of gene expression, nucleoid organization and DNA protection. The polypeptide is Nucleoid-associated protein Sfum_2790 (Syntrophobacter fumaroxidans (strain DSM 10017 / MPOB)).